Reading from the N-terminus, the 137-residue chain is Phosphoribosyl-AMP cyclohydrolase (137 aa).

Asp84 lines the Mg(2+) pocket. Cys85 is a binding site for Zn(2+). Asp86 and Asp88 together coordinate Mg(2+). Zn(2+)-binding residues include Cys101 and Cys108.

Belongs to the PRA-CH family. In terms of assembly, homodimer. Requires Mg(2+) as cofactor. Zn(2+) serves as cofactor.

The protein resides in the cytoplasm. It catalyses the reaction 1-(5-phospho-beta-D-ribosyl)-5'-AMP + H2O = 1-(5-phospho-beta-D-ribosyl)-5-[(5-phospho-beta-D-ribosylamino)methylideneamino]imidazole-4-carboxamide. It participates in amino-acid biosynthesis; L-histidine biosynthesis; L-histidine from 5-phospho-alpha-D-ribose 1-diphosphate: step 3/9. Its function is as follows. Catalyzes the hydrolysis of the adenine ring of phosphoribosyl-AMP. The sequence is that of Phosphoribosyl-AMP cyclohydrolase from Prosthecochloris aestuarii (strain DSM 271 / SK 413).